A 264-amino-acid polypeptide reads, in one-letter code: Hemin import ATP-binding protein HmuV (264 aa).

Residues 2 to 241 form the ABC transporter domain; the sequence is IEVSGVSVRL…ETMLSVFGLR (240 aa). 34-41 contacts ATP; that stretch reads GPNGSGKT.

It belongs to the ABC transporter superfamily. Heme (hemin) importer (TC 3.A.1.14.5) family. The complex is composed of two ATP-binding proteins (HmuV), two transmembrane proteins (HmuU) and a solute-binding protein (HmuT).

The protein resides in the cell inner membrane. Part of the ABC transporter complex HmuTUV involved in hemin import. Responsible for energy coupling to the transport system. In Rhizobium leguminosarum, this protein is Hemin import ATP-binding protein HmuV.